The sequence spans 24 residues: Sperm protamine P3 (24 aa).

Residues 1–24 (RRRRRRRRHRRRRGRRGRRSRGRR) form a disordered region.

Testis.

The protein resides in the nucleus. It is found in the chromosome. Protamines substitute for histones in the chromatin of sperm during the haploid phase of spermatogenesis. They compact sperm DNA into a highly condensed, stable and inactive complex. This is Sperm protamine P3 from Octopus vulgaris (Common octopus).